The sequence spans 284 residues: 2-dehydro-3-deoxyphosphooctonate aldolase (284 aa).

This sequence belongs to the KdsA family.

The protein resides in the cytoplasm. The enzyme catalyses D-arabinose 5-phosphate + phosphoenolpyruvate + H2O = 3-deoxy-alpha-D-manno-2-octulosonate-8-phosphate + phosphate. Its pathway is carbohydrate biosynthesis; 3-deoxy-D-manno-octulosonate biosynthesis; 3-deoxy-D-manno-octulosonate from D-ribulose 5-phosphate: step 2/3. The protein operates within bacterial outer membrane biogenesis; lipopolysaccharide biosynthesis. This chain is 2-dehydro-3-deoxyphosphooctonate aldolase, found in Ralstonia pickettii (strain 12J).